The chain runs to 483 residues: Keratin, type II cytoskeletal 8 (483 aa).

The span at 1–25 shows a compositional bias: polar residues; it reads MSVRVTQKSYKMSTSGPRAFSSRSF. The tract at residues 1 to 43 is disordered; sequence MSVRVTQKSYKMSTSGPRAFSSRSFTSGPGARISSSSFSRVGS. Residues 1 to 90 are head; the sequence is MSVRVTQKSY…DPNIQAVRTQ (90 aa). Position 9 is a phosphoserine; by PKC/PRKCE (serine 9). A Glycyl lysine isopeptide (Lys-Gly) (interchain with G-Cter in SUMO2) cross-link involves residue lysine 11. A phosphoserine mark is found at serine 13, serine 15, serine 21, and serine 22. Arginine 23 bears the Omega-N-methylarginine mark. Serine 24 bears the Phosphoserine; by PKC/PRKCE mark. A Phosphoserine modification is found at serine 24. The residue at position 26 (threonine 26) is a Phosphothreonine. Over residues 26–43 the composition is skewed to low complexity; it reads TSGPGARISSSSFSRVGS. Serine 27 is subject to Phosphoserine. Residue arginine 32 is modified to Omega-N-methylarginine. Serine 34, serine 37, and serine 39 each carry phosphoserine. Arginine 40 is modified (omega-N-methylarginine). A phosphoserine mark is found at serine 43, serine 44, and serine 47. Position 49 is an asymmetric dimethylarginine; alternate (arginine 49). Arginine 49 bears the Omega-N-methylarginine; alternate mark. The residue at position 51 (serine 51) is a Phosphoserine. The interval 91–126 is coil 1A; that stretch reads EKEQIKTLNNKFASFIDKVRFLEQQNKMLETKWSLL. One can recognise an IF rod domain in the interval 91 to 402; sequence EKEQIKTLNN…KLLEGEESRL (312 aa). Residue lysine 101 is modified to N6-malonyllysine. Glycyl lysine isopeptide (Lys-Gly) (interchain with G-Cter in SUMO2) cross-links involve residues lysine 122 and lysine 130. The linker 1 stretch occupies residues 127–143; it reads QQQKTSRSNMDNMFESY. The coil 1B stretch occupies residues 144–235; that stretch reads INNLRRQLEA…QIHEEEIREL (92 aa). Lysine 197 participates in a covalent cross-link: Glycyl lysine isopeptide (Lys-Gly) (interchain with G-Cter in SUMO1); alternate. Lysine 197 participates in a covalent cross-link: Glycyl lysine isopeptide (Lys-Gly) (interchain with G-Cter in SUMO2); alternate. Lysine 207 is subject to N6-acetyllysine. Residues 236-259 form a linker 12 region; the sequence is QSQISDTSVVLSMDNSRSLDMDSI. Phosphoserine is present on residues serine 253, serine 258, and serine 274. The segment at 260-398 is coil 2; it reads IAEVRAQYEE…ATYRKLLEGE (139 aa). A necessary for interaction with PNN region spans residues 261–382; the sequence is AEVRAQYEEI…EYQELMNVKL (122 aa). A Glycyl lysine isopeptide (Lys-Gly) (interchain with G-Cter in SUMO2) cross-link involves residue lysine 285. Residue lysine 295 forms a Glycyl lysine isopeptide (Lys-Gly) (interchain with G-Cter in SUMO2); alternate linkage. Lysine 295 bears the N6-acetyllysine; alternate mark. Residue lysine 304 forms a Glycyl lysine isopeptide (Lys-Gly) (interchain with G-Cter in SUMO2) linkage. Residue lysine 325 forms a Glycyl lysine isopeptide (Lys-Gly) (interchain with G-Cter in SUMO2); alternate linkage. At lysine 325 the chain carries N6-acetyllysine; alternate. A Glycyl lysine isopeptide (Lys-Gly) (interchain with G-Cter in SUMO2) cross-link involves residue lysine 393. Residues 399–483 are tail; it reads ESRLESGMQN…VSESSDIMSK (85 aa). A phosphoserine mark is found at serine 400, serine 404, serine 410, serine 417, serine 424, serine 426, and serine 432. Lysine 472 participates in a covalent cross-link: Glycyl lysine isopeptide (Lys-Gly) (interchain with G-Cter in SUMO1); alternate. A Glycyl lysine isopeptide (Lys-Gly) (interchain with G-Cter in SUMO2); alternate cross-link involves residue lysine 472. Residues serine 475, serine 477, serine 478, and serine 482 each carry the phosphoserine modification.

The protein belongs to the intermediate filament family. As to quaternary structure, heterotetramer of two type I and two type II keratins. Forms a heterodimer with KRT18. Associates with KRT20. Interacts with PNN. When associated with KRT19, interacts with DMD. Interacts with TCHP. Interacts with APEX1. Interacts with GPER1. Interacts with EPPK1. Interacts with PKP1 and PKP2. In terms of processing, O-glycosylated. O-GlcNAcylation at multiple sites increases solubility, and decreases stability by inducing proteasomal degradation. O-glycosylated (O-GlcNAcylated), in a cell cycle-dependent manner. Expressed in cardiac and striated muscle. Expressed at Z-lines within the muscle fibers and at Z-line and M-line domains at costameres at the sarcolemmal membrane (at protein level). Observed in coagulating gland, bladder, salivary gland, kidney, spleen, thymus, lung and heart. Also observed in ventral prostate, seminal vesicle and liver where expression increases following castration.

It is found in the cytoplasm. The protein resides in the nucleus. It localises to the nucleoplasm. The protein localises to the nucleus matrix. Together with KRT19, helps to link the contractile apparatus to dystrophin at the costameres of striated muscle. This chain is Keratin, type II cytoskeletal 8 (Krt8), found in Rattus norvegicus (Rat).